The following is a 465-amino-acid chain: Cysteine--tRNA ligase (465 aa).

Cys-27 contributes to the Zn(2+) binding site. The 'HIGH' region signature appears at 29 to 39; the sequence is PTVYDDAHLGH. Cys-207, His-237, and Glu-241 together coordinate Zn(2+). The 'KMSKS' region motif lies at 269–273; sequence KMSKS. Lys-272 contacts ATP.

Belongs to the class-I aminoacyl-tRNA synthetase family. Monomer. Zn(2+) serves as cofactor.

It is found in the cytoplasm. It carries out the reaction tRNA(Cys) + L-cysteine + ATP = L-cysteinyl-tRNA(Cys) + AMP + diphosphate. This chain is Cysteine--tRNA ligase, found in Helicobacter pylori (strain HPAG1).